The following is a 316-amino-acid chain: Ribosomal RNA small subunit methyltransferase H (316 aa).

Residues 35–37, Asp-55, Phe-79, Asp-101, and Gln-108 contribute to the S-adenosyl-L-methionine site; that span reads GGH. The interval 291-316 is disordered; that stretch reads AIKPSKDEVDENTRSRSSVLRIAEKL. Residues 294 to 304 are compositionally biased toward basic and acidic residues; the sequence is PSKDEVDENTR.

The protein belongs to the methyltransferase superfamily. RsmH family.

Its subcellular location is the cytoplasm. The enzyme catalyses cytidine(1402) in 16S rRNA + S-adenosyl-L-methionine = N(4)-methylcytidine(1402) in 16S rRNA + S-adenosyl-L-homocysteine + H(+). In terms of biological role, specifically methylates the N4 position of cytidine in position 1402 (C1402) of 16S rRNA. This is Ribosomal RNA small subunit methyltransferase H from Vibrio atlanticus (strain LGP32) (Vibrio splendidus (strain Mel32)).